Consider the following 264-residue polypeptide: Endonuclease V (264 aa).

Positions 72 and 137 each coordinate Mg(2+).

The protein belongs to the endonuclease V family. The cofactor is Mg(2+).

Its subcellular location is the cytoplasm. It catalyses the reaction Endonucleolytic cleavage at apurinic or apyrimidinic sites to products with a 5'-phosphate.. Functionally, DNA repair enzyme involved in the repair of deaminated bases. Selectively cleaves double-stranded DNA at the second phosphodiester bond 3' to a deoxyinosine leaving behind the intact lesion on the nicked DNA. The sequence is that of Endonuclease V from Halobacterium salinarum (strain ATCC 700922 / JCM 11081 / NRC-1) (Halobacterium halobium).